The primary structure comprises 87 residues: HssA/B-like protein 54 (87 aa).

This sequence belongs to the hssA/B family.

The chain is HssA/B-like protein 54 (hssl54) from Dictyostelium discoideum (Social amoeba).